Reading from the N-terminus, the 93-residue chain is Small ribosomal subunit protein uS19 (93 aa).

It belongs to the universal ribosomal protein uS19 family.

In terms of biological role, protein S19 forms a complex with S13 that binds strongly to the 16S ribosomal RNA. The chain is Small ribosomal subunit protein uS19 from Ehrlichia chaffeensis (strain ATCC CRL-10679 / Arkansas).